The chain runs to 465 residues: Mothers against decapentaplegic homolog 5 (465 aa).

Residue threonine 2 is modified to N-acetylthreonine. The region spanning 13 to 137 is the MH1 domain; sequence PAVKRLLGWK…YKRVESPVLP (125 aa). Zn(2+)-binding residues include cysteine 65, cysteine 110, cysteine 122, and histidine 127. Residues 163-249 form a disordered region; it reads NEPHMPQNAT…PMDTSNNMIP (87 aa). Residues 169-182 are compositionally biased toward polar residues; the sequence is QNATFPDSFHQPNN. The segment covering 186-197 has biased composition (pro residues); sequence PLSPNSPYPPSP. A compositionally biased stretch (low complexity) spans 198–214; that stretch reads ASSTYPNSPASSGPGSP. Positions 234-249 are enriched in polar residues; the sequence is GQDNSQPMDTSNNMIP. Positions 271–465 constitute an MH2 domain; that stretch reads WCSIVYYELN…SPLNPISSVS (195 aa). Residues serine 463 and serine 465 each carry the phosphoserine modification.

It belongs to the dwarfin/SMAD family. In terms of assembly, homodimer. Forms trimers with the co-SMAD SMAD4. Interacts with PEBP2-alpha subunit and SMURF1. Interacts with SUV39H1 and SUV39H2. Interacts (via MH2 domain) with LEMD3. Interacts with WWP1. Interacts with TMEM119. Interacts with ZNF8. Interacts with RANBP3L. Interacts with HK1. Interacts with HGS; this interaction attenuates BMP signaling. Phosphorylated on serine by BMP (bone morphogenetic proteins) type 1 receptor kinase. In terms of processing, ubiquitin-mediated proteolysis by SMAD-specific E3 ubiquitin ligase SMURF1. In terms of tissue distribution, ubiquitous.

Its subcellular location is the cytoplasm. The protein resides in the nucleus. It is found in the mitochondrion. Transcriptional regulator that plays a role in various cellular processes including embryonic development, cell differentiation, angiogenesis and tissue homeostasis. Upon BMP ligand binding to their receptors at the cell surface, is phosphorylated by activated type I BMP receptors (BMPRIs) and associates with SMAD4 to form a heteromeric complex which translocates into the nucleus acting as transcription factor. In turn, the hetero-trimeric complex recognizes cis-regulatory elements containing Smad Binding Elements (SBEs) to modulate the outcome of the signaling network. Non-phosphorylated SMAD5 has a cytoplasmic role in energy metabolism regulation by promoting mitochondrial respiration and glycolysis in response to cytoplasmic pH changes. Mechanistically, interacts with hexokinase 1/HK1 and thereby accelerates glycolysis. This is Mothers against decapentaplegic homolog 5 (SMAD5) from Homo sapiens (Human).